The chain runs to 319 residues: Protease HtpX homolog (319 aa).

2 helical membrane-spanning segments follow: residues 6-26 and 28-48; these read TAML…VIGG and GGMM…YWNS. A Zn(2+)-binding site is contributed by histidine 130. Glutamate 131 is an active-site residue. Histidine 134 provides a ligand contact to Zn(2+). 2 helical membrane passes run 145–165 and 172–192; these read LTAT…FFGG and PLGF…AMLV. Zn(2+) is bound at residue glutamate 201. Residues 277 to 319 are disordered; sequence MARETSTGSTAPVRPDNAGRKSRSVPRTGWGRGGSEPPKGPWS.

It belongs to the peptidase M48B family. The cofactor is Zn(2+).

It is found in the cell inner membrane. The chain is Protease HtpX homolog from Rhizobium meliloti (strain 1021) (Ensifer meliloti).